The sequence spans 189 residues: Crossover junction endodeoxyribonuclease RuvC (189 aa).

Residues aspartate 11, glutamate 71, and aspartate 143 contribute to the active site. 3 residues coordinate Mg(2+): aspartate 11, glutamate 71, and aspartate 143.

It belongs to the RuvC family. Homodimer which binds Holliday junction (HJ) DNA. The HJ becomes 2-fold symmetrical on binding to RuvC with unstacked arms; it has a different conformation from HJ DNA in complex with RuvA. In the full resolvosome a probable DNA-RuvA(4)-RuvB(12)-RuvC(2) complex forms which resolves the HJ. It depends on Mg(2+) as a cofactor.

The protein resides in the cytoplasm. The enzyme catalyses Endonucleolytic cleavage at a junction such as a reciprocal single-stranded crossover between two homologous DNA duplexes (Holliday junction).. Functionally, the RuvA-RuvB-RuvC complex processes Holliday junction (HJ) DNA during genetic recombination and DNA repair. Endonuclease that resolves HJ intermediates. Cleaves cruciform DNA by making single-stranded nicks across the HJ at symmetrical positions within the homologous arms, yielding a 5'-phosphate and a 3'-hydroxyl group; requires a central core of homology in the junction. The consensus cleavage sequence is 5'-(A/T)TT(C/G)-3'. Cleavage occurs on the 3'-side of the TT dinucleotide at the point of strand exchange. HJ branch migration catalyzed by RuvA-RuvB allows RuvC to scan DNA until it finds its consensus sequence, where it cleaves and resolves the cruciform DNA. In Methylorubrum populi (strain ATCC BAA-705 / NCIMB 13946 / BJ001) (Methylobacterium populi), this protein is Crossover junction endodeoxyribonuclease RuvC.